The following is a 113-amino-acid chain: Large ribosomal subunit protein bL17 (113 aa).

It belongs to the bacterial ribosomal protein bL17 family. As to quaternary structure, part of the 50S ribosomal subunit. Contacts protein L32.

This is Large ribosomal subunit protein bL17 from Clostridioides difficile (strain 630) (Peptoclostridium difficile).